The following is a 247-amino-acid chain: Protein SODIUM POTASSIUM ROOT DEFECTIVE 3 (247 aa).

The segment at 130-166 (GSTGQDTVATEESEASAPKRGSSGPVEEKKKSSGSGS) is disordered. Positions 167–235 (DQVVVLRVSL…KVKNAQFWTP (69 aa)) constitute an HMA domain. 2 residues coordinate a metal cation: Cys-180 and Cys-183.

It is found in the cytoplasm. In terms of biological role, heavy metal-associated protein involved in salt tolerance. This is Protein SODIUM POTASSIUM ROOT DEFECTIVE 3 from Arabidopsis thaliana (Mouse-ear cress).